The primary structure comprises 186 residues: Ribosome-recycling factor (186 aa).

Belongs to the RRF family.

It localises to the cytoplasm. Functionally, responsible for the release of ribosomes from messenger RNA at the termination of protein biosynthesis. May increase the efficiency of translation by recycling ribosomes from one round of translation to another. The sequence is that of Ribosome-recycling factor from Methylocella silvestris (strain DSM 15510 / CIP 108128 / LMG 27833 / NCIMB 13906 / BL2).